Here is a 596-residue protein sequence, read N- to C-terminus: Probable ATP-dependent RNA helicase DDX52 (596 aa).

N6-acetyllysine is present on K15. The residue at position 39 (S39) is a Phosphoserine. Residues 68–94 form a disordered region; the sequence is LPDEEKTEESQIERKKQNRKKKKITSE. The Q motif signature appears at 163-191; the sequence is QLDQEYKINSRLLQNILDAGFQTPTPIQM. Residues 194 to 372 enclose the Helicase ATP-binding domain; sequence IPVMLHGREL…RLNLDSVITV (179 aa). 207–214 lines the ATP pocket; it reads APTGSGKT. A DEAD box motif is present at residues 316–319; the sequence is DESD. Residues 383–544 enclose the Helicase C-terminal domain; sequence TVEQELLFVG…PVPEYIKGFQ (162 aa). The interval 575 to 596 is disordered; that stretch reads AKDKRKKVTGQNKKKVAPEDKS. Over residues 577-589 the composition is skewed to basic residues; sequence DKRKKVTGQNKKK.

The protein belongs to the DEAD box helicase family. DDX52/ROK1 subfamily.

It is found in the nucleus. Its subcellular location is the nucleolus. It carries out the reaction ATP + H2O = ADP + phosphate + H(+). This is Probable ATP-dependent RNA helicase DDX52 (DDX52) from Bos taurus (Bovine).